A 165-amino-acid polypeptide reads, in one-letter code: Dihydrofolate reductase (165 aa).

Residues 3 to 165 (VVGLIWAQST…RYRLHSYHRS (163 aa)) form the DHFR domain. 7–9 (IWA) contributes to the substrate binding site. Residues 8–9 (WA) and 16–21 (IGRDGG) contribute to the NADP(+) site. Aspartate 29 is a substrate binding site. Position 45–48 (45–48 (GRRT)) interacts with NADP(+). Arginine 62 serves as a coordination point for substrate. Residues 67 to 70 (LSRQ) and 100 to 105 (IGGEQI) contribute to the NADP(+) site. Threonine 119 contacts substrate.

Belongs to the dihydrofolate reductase family.

It catalyses the reaction (6S)-5,6,7,8-tetrahydrofolate + NADP(+) = 7,8-dihydrofolate + NADPH + H(+). It participates in cofactor biosynthesis; tetrahydrofolate biosynthesis; 5,6,7,8-tetrahydrofolate from 7,8-dihydrofolate: step 1/1. Functionally, key enzyme in folate metabolism. Catalyzes an essential reaction for de novo glycine and purine synthesis, and for DNA precursor synthesis. The protein is Dihydrofolate reductase (folA) of Mycobacterium leprae (strain TN).